A 346-amino-acid polypeptide reads, in one-letter code: Phenylalanine--tRNA ligase alpha subunit (346 aa).

Position 264 (glutamate 264) interacts with Mg(2+).

This sequence belongs to the class-II aminoacyl-tRNA synthetase family. Phe-tRNA synthetase alpha subunit type 1 subfamily. Tetramer of two alpha and two beta subunits. Requires Mg(2+) as cofactor.

The protein resides in the cytoplasm. It carries out the reaction tRNA(Phe) + L-phenylalanine + ATP = L-phenylalanyl-tRNA(Phe) + AMP + diphosphate + H(+). In Leifsonia xyli subsp. xyli (strain CTCB07), this protein is Phenylalanine--tRNA ligase alpha subunit.